A 176-amino-acid chain; its full sequence is dCTP deaminase (176 aa).

DCTP contacts are provided by residues 102 to 107 and Asp-118; that span reads RSTFAR. Glu-128 acts as the Proton donor/acceptor in catalysis. The dCTP site is built by Tyr-160, Lys-166, and Gln-167.

The protein belongs to the dCTP deaminase family. In terms of assembly, homotrimer.

It catalyses the reaction dCTP + H2O + H(+) = dUTP + NH4(+). The protein operates within pyrimidine metabolism; dUMP biosynthesis; dUMP from dCTP (dUTP route): step 1/2. Its function is as follows. Catalyzes the deamination of dCTP to dUTP. This is dCTP deaminase from Staphylothermus marinus (strain ATCC 43588 / DSM 3639 / JCM 9404 / F1).